The primary structure comprises 372 residues: Chloroplast protein FOR GROWTH AND FERTILITY 2 (372 aa).

A disordered region spans residues 1–20 (MDRLLQPPSSHSIAPSKFQS). The N-terminal 78 residues, 1-78 (MDRLLQPPSS…NQSSNFLIAS (78 aa)), are a transit peptide targeting the chloroplast. Residues 7-20 (PPSSHSIAPSKFQS) are compositionally biased toward polar residues. 7 helical membrane passes run 109 to 129 (VILV…PPAF), 161 to 181 (FFAG…LAPL), 195 to 215 (ALWG…FLLL), 231 to 251 (VVGL…SEMP), 281 to 301 (GIVH…LALP), 309 to 329 (FLIM…VFIG), and 352 to 372 (LVAI…FSLY).

As to expression, mostly expressed in leaves, stems and flowers, to a lower extent, in roots, floral bud, inflorescence and siliques, and, barely, in seedlings.

The protein localises to the plastid. It is found in the chloroplast membrane. It localises to the plastid membrane. In terms of biological role, together with CGF1, essential protein which supports female gametogenesis and embryogenesis, probably by securing local energy supply. This chain is Chloroplast protein FOR GROWTH AND FERTILITY 2, found in Arabidopsis thaliana (Mouse-ear cress).